The chain runs to 316 residues: 4-hydroxy-3-methylbut-2-enyl diphosphate reductase (316 aa).

A [4Fe-4S] cluster-binding site is contributed by Cys12. The (2E)-4-hydroxy-3-methylbut-2-enyl diphosphate site is built by His41 and His74. Dimethylallyl diphosphate contacts are provided by His41 and His74. 2 residues coordinate isopentenyl diphosphate: His41 and His74. [4Fe-4S] cluster is bound at residue Cys96. His124 serves as a coordination point for (2E)-4-hydroxy-3-methylbut-2-enyl diphosphate. Dimethylallyl diphosphate is bound at residue His124. An isopentenyl diphosphate-binding site is contributed by His124. Residue Glu126 is the Proton donor of the active site. A (2E)-4-hydroxy-3-methylbut-2-enyl diphosphate-binding site is contributed by Thr167. Cys197 lines the [4Fe-4S] cluster pocket. (2E)-4-hydroxy-3-methylbut-2-enyl diphosphate-binding residues include Ser225, Ser226, Asn227, and Ser269. Residues Ser225, Ser226, Asn227, and Ser269 each coordinate dimethylallyl diphosphate. Ser225, Ser226, Asn227, and Ser269 together coordinate isopentenyl diphosphate.

This sequence belongs to the IspH family. Homodimer. [4Fe-4S] cluster serves as cofactor.

The enzyme catalyses isopentenyl diphosphate + 2 oxidized [2Fe-2S]-[ferredoxin] + H2O = (2E)-4-hydroxy-3-methylbut-2-enyl diphosphate + 2 reduced [2Fe-2S]-[ferredoxin] + 2 H(+). It catalyses the reaction dimethylallyl diphosphate + 2 oxidized [2Fe-2S]-[ferredoxin] + H2O = (2E)-4-hydroxy-3-methylbut-2-enyl diphosphate + 2 reduced [2Fe-2S]-[ferredoxin] + 2 H(+). Its pathway is isoprenoid biosynthesis; dimethylallyl diphosphate biosynthesis; dimethylallyl diphosphate from (2E)-4-hydroxy-3-methylbutenyl diphosphate: step 1/1. It functions in the pathway isoprenoid biosynthesis; isopentenyl diphosphate biosynthesis via DXP pathway; isopentenyl diphosphate from 1-deoxy-D-xylulose 5-phosphate: step 6/6. In terms of biological role, catalyzes the conversion of 1-hydroxy-2-methyl-2-(E)-butenyl 4-diphosphate (HMBPP) into a mixture of isopentenyl diphosphate (IPP) and dimethylallyl diphosphate (DMAPP). Acts in the terminal step of the DOXP/MEP pathway for isoprenoid precursor biosynthesis. This Pectobacterium atrosepticum (strain SCRI 1043 / ATCC BAA-672) (Erwinia carotovora subsp. atroseptica) protein is 4-hydroxy-3-methylbut-2-enyl diphosphate reductase.